The following is a 77-amino-acid chain: Acyl carrier protein (77 aa).

The Carrier domain occupies 1–76 (MDREQRIKEI…DVINYLNEKL (76 aa)). Residue S36 is modified to O-(pantetheine 4'-phosphoryl)serine.

This sequence belongs to the acyl carrier protein (ACP) family. Post-translationally, 4'-phosphopantetheine is transferred from CoA to a specific serine of apo-ACP by AcpS. This modification is essential for activity because fatty acids are bound in thioester linkage to the sulfhydryl of the prosthetic group.

The protein localises to the cytoplasm. It functions in the pathway lipid metabolism; fatty acid biosynthesis. Functionally, carrier of the growing fatty acid chain in fatty acid biosynthesis. The polypeptide is Acyl carrier protein (Hydrogenobaculum sp. (strain Y04AAS1)).